Consider the following 366-residue polypeptide: D-alanine--D-alanine ligase (366 aa).

Residues 149 to 358 (KIAFDHAGLP…FSELVDTLIQ (210 aa)) form the ATP-grasp domain. 185-240 (ETTLEYPCFVKPANLGSSVGIAKVRSRSELETALDNAASYDRRIIVEAGVEAKELE) is an ATP binding site. D311, E325, and N327 together coordinate Mg(2+).

It belongs to the D-alanine--D-alanine ligase family. It depends on Mg(2+) as a cofactor. Mn(2+) serves as cofactor.

The protein localises to the cytoplasm. The enzyme catalyses 2 D-alanine + ATP = D-alanyl-D-alanine + ADP + phosphate + H(+). It participates in cell wall biogenesis; peptidoglycan biosynthesis. Functionally, cell wall formation. The sequence is that of D-alanine--D-alanine ligase from Trichodesmium erythraeum (strain IMS101).